The following is a 195-amino-acid chain: Imidazoleglycerol-phosphate dehydratase (195 aa).

It belongs to the imidazoleglycerol-phosphate dehydratase family.

It localises to the cytoplasm. It carries out the reaction D-erythro-1-(imidazol-4-yl)glycerol 3-phosphate = 3-(imidazol-4-yl)-2-oxopropyl phosphate + H2O. It participates in amino-acid biosynthesis; L-histidine biosynthesis; L-histidine from 5-phospho-alpha-D-ribose 1-diphosphate: step 6/9. This is Imidazoleglycerol-phosphate dehydratase from Deinococcus deserti (strain DSM 17065 / CIP 109153 / LMG 22923 / VCD115).